The primary structure comprises 446 residues: MALLLLRMGVSVALLVAFFSSLIPSSEAYDPLDPNGNITIKWDVLQWTPDGYVAVVSLYNYQQYRHIQSPGWKLGWVWAKKEIIWAMNGGQATEQGDCSKFKSNIPHCCKKDPEIVDLLPGTPYNMQIANCCKGGVLNSWAQDPANAIASFQVSVGQAGTTNKTVRVPRNFTLKSPGPGYTCGSAKVVRPTKFFSQDGRRTTQAHMTWNVTCTYSQIVAQRSPTCCVSLSSFYNDTIVNCPTCSCGCQNNKPGSCVEGNSPYLASVVNTHNKDSLTPLVQCTSHMCPIRVHWHVKVNYKEYWRVKITVTNFNYRMNYSQWNLVTQHPSFDNLTTIFSFNYKSLNPYGVINDTAMLWGIKYYNDLLMTAGPDGNVQSELLFKKDPKSFTFEKGWAFPRRVYFNGDNCVMPPPDAYPWLPNASTRVMSSILLPFITIWTALTFLMVYA.

Residues methionine 1–alanine 28 form the signal peptide. N-linked (GlcNAc...) asparagine glycosylation is found at asparagine 37, asparagine 162, asparagine 170, asparagine 209, asparagine 234, asparagine 316, asparagine 331, asparagine 350, and asparagine 419. Alanine 420 carries the GPI-anchor amidated alanine lipid modification. Positions serine 421–alanine 446 are cleaved as a propeptide — removed in mature form.

The protein belongs to the COBRA family.

The protein resides in the cell membrane. In terms of biological role, involved in determining the orientation of cell expansion, probably by playing an important role in cellulose deposition. May act by recruiting cellulose synthesizing complexes to discrete positions on the cell surface. This is COBRA-like protein 1 (BC1L6) from Oryza sativa subsp. japonica (Rice).